Here is a 521-residue protein sequence, read N- to C-terminus: Protein nucleotidyltransferase YdiU (521 aa).

Glycine 109, glycine 111, arginine 112, lysine 131, aspartate 143, glycine 144, arginine 194, and arginine 201 together coordinate ATP. Aspartate 270 acts as the Proton acceptor in catalysis. Mg(2+) is bound by residues asparagine 271 and aspartate 280. Residue aspartate 280 participates in ATP binding.

This sequence belongs to the SELO family. It depends on Mg(2+) as a cofactor. Mn(2+) is required as a cofactor.

It carries out the reaction L-seryl-[protein] + ATP = 3-O-(5'-adenylyl)-L-seryl-[protein] + diphosphate. The enzyme catalyses L-threonyl-[protein] + ATP = 3-O-(5'-adenylyl)-L-threonyl-[protein] + diphosphate. The catalysed reaction is L-tyrosyl-[protein] + ATP = O-(5'-adenylyl)-L-tyrosyl-[protein] + diphosphate. It catalyses the reaction L-histidyl-[protein] + UTP = N(tele)-(5'-uridylyl)-L-histidyl-[protein] + diphosphate. It carries out the reaction L-seryl-[protein] + UTP = O-(5'-uridylyl)-L-seryl-[protein] + diphosphate. The enzyme catalyses L-tyrosyl-[protein] + UTP = O-(5'-uridylyl)-L-tyrosyl-[protein] + diphosphate. In terms of biological role, nucleotidyltransferase involved in the post-translational modification of proteins. It can catalyze the addition of adenosine monophosphate (AMP) or uridine monophosphate (UMP) to a protein, resulting in modifications known as AMPylation and UMPylation. This Burkholderia pseudomallei (strain 1106a) protein is Protein nucleotidyltransferase YdiU.